We begin with the raw amino-acid sequence, 106 residues long: Thioredoxin (106 aa).

One can recognise a Thioredoxin domain in the interval 2–106; that stretch reads SHYIELTEEN…LKEQLNKLLG (105 aa). Cys30 and Cys33 are disulfide-bonded.

It belongs to the thioredoxin family.

Functionally, participates in various redox reactions through the reversible oxidation of its active center dithiol to a disulfide and catalyzes dithiol-disulfide exchange reactions. This Helicobacter pylori (strain J99 / ATCC 700824) (Campylobacter pylori J99) protein is Thioredoxin (trxA).